Here is a 443-residue protein sequence, read N- to C-terminus: GPI mannosyltransferase 1 (443 aa).

The next 11 helical transmembrane spans lie at 8–28 (PFMV…YGAW), 68–88 (PLLA…FSFG), 90–110 (ALFA…LTLT), 136–156 (TRGS…WAVL), 160–180 (IYLG…PFIY), 232–252 (LTLI…LHYG), 273–291 (FSPY…AGAV), 302–322 (FESL…PLVL), 347–367 (SQYF…SSLL), 374–394 (IAVA…GYLL), and 406–426 (LFLA…VIVA).

The protein belongs to the PIGM family.

Its subcellular location is the endoplasmic reticulum membrane. It functions in the pathway glycolipid biosynthesis; glycosylphosphatidylinositol-anchor biosynthesis. Its function is as follows. Mannosyltransferase involved in glycosylphosphatidylinositol-anchor biosynthesis. Transfers the first alpha-1,4-mannose to GlcN-acyl-PI during GPI precursor assembly. Required for cell wall integrity. The polypeptide is GPI mannosyltransferase 1 (gpi14) (Emericella nidulans (strain FGSC A4 / ATCC 38163 / CBS 112.46 / NRRL 194 / M139) (Aspergillus nidulans)).